The primary structure comprises 100 residues: Putative pterin-4-alpha-carbinolamine dehydratase (100 aa).

This sequence belongs to the pterin-4-alpha-carbinolamine dehydratase family.

The catalysed reaction is (4aS,6R)-4a-hydroxy-L-erythro-5,6,7,8-tetrahydrobiopterin = (6R)-L-erythro-6,7-dihydrobiopterin + H2O. The protein is Putative pterin-4-alpha-carbinolamine dehydratase of Afipia carboxidovorans (strain ATCC 49405 / DSM 1227 / KCTC 32145 / OM5) (Oligotropha carboxidovorans).